We begin with the raw amino-acid sequence, 909 residues long: Alanine--tRNA ligase (909 aa).

The Zn(2+) site is built by H600, H604, C704, and H708.

Belongs to the class-II aminoacyl-tRNA synthetase family. Zn(2+) is required as a cofactor.

It is found in the cytoplasm. The catalysed reaction is tRNA(Ala) + L-alanine + ATP = L-alanyl-tRNA(Ala) + AMP + diphosphate. Catalyzes the attachment of alanine to tRNA(Ala) in a two-step reaction: alanine is first activated by ATP to form Ala-AMP and then transferred to the acceptor end of tRNA(Ala). Also edits incorrectly charged Ser-tRNA(Ala) and Gly-tRNA(Ala) via its editing domain. This chain is Alanine--tRNA ligase, found in Staphylothermus marinus (strain ATCC 43588 / DSM 3639 / JCM 9404 / F1).